Consider the following 730-residue polypeptide: Replication restart protein PriA (730 aa).

The region spanning 212-378 (LLFHSGFNVW…QNGKYQHLVL (167 aa)) is the Helicase ATP-binding domain. Residue 225-232 (GVTGSGKT) coordinates ATP. The DEAH box motif lies at 321 to 324 (DEEH). Zn(2+)-binding residues include C437, C440, C446, C449, C464, C467, C477, and C480. The Helicase C-terminal domain occupies 472–640 (TIPRQCGDCG…LPPFTFQALI (169 aa)).

It belongs to the helicase family. PriA subfamily. Component of the replication restart primosome. Requires Zn(2+) as cofactor.

It carries out the reaction Couples ATP hydrolysis with the unwinding of duplex DNA by translocating in the 3'-5' direction.. It catalyses the reaction ATP + H2O = ADP + phosphate + H(+). In terms of biological role, initiates the restart of stalled replication forks, which reloads the replicative helicase on sites other than the origin of replication. Recognizes and binds to abandoned replication forks and remodels them to uncover a helicase loading site. Promotes assembly of the primosome at these replication forks. The chain is Replication restart protein PriA from Haemophilus influenzae (strain ATCC 51907 / DSM 11121 / KW20 / Rd).